The chain runs to 405 residues: Formin-like protein 15a (405 aa).

Residues 1 to 31 are disordered; the sequence is MSLVEISGSDAMAAPMPGRVPPPPPRPPPMP. Pro residues predominate over residues 18 to 31; the sequence is GRVPPPPPRPPPMP. An FH2 domain is found at 52-405; the sequence is FPRPAKKRAS…VCWFFVRLMI (354 aa).

This sequence belongs to the formin-like family. Class-II subfamily.

The chain is Formin-like protein 15a (FH15A) from Arabidopsis thaliana (Mouse-ear cress).